The chain runs to 147 residues: UPF0178 protein VS_2364 (147 aa).

The protein belongs to the UPF0178 family.

This is UPF0178 protein VS_2364 from Vibrio atlanticus (strain LGP32) (Vibrio splendidus (strain Mel32)).